Reading from the N-terminus, the 145-residue chain is Ribosomal RNA large subunit methyltransferase H (145 aa).

S-adenosyl-L-methionine-binding positions include leucine 62, glycine 94, and 113–118 (LGQLTL).

The protein belongs to the RNA methyltransferase RlmH family. As to quaternary structure, homodimer.

The protein resides in the cytoplasm. The catalysed reaction is pseudouridine(1915) in 23S rRNA + S-adenosyl-L-methionine = N(3)-methylpseudouridine(1915) in 23S rRNA + S-adenosyl-L-homocysteine + H(+). Specifically methylates the pseudouridine at position 1915 (m3Psi1915) in 23S rRNA. In Deinococcus deserti (strain DSM 17065 / CIP 109153 / LMG 22923 / VCD115), this protein is Ribosomal RNA large subunit methyltransferase H.